A 154-amino-acid chain; its full sequence is MAPKAEKKPAAKKVAEEEPSEKAAPAEKAPAGKKPKAEKRLPAGKSAGKEGGDKKGRKKAKKSVETYKIYIFKVLKQVHPDIGISSKAMSIMNSFINDIFEKLAAEAAKLARYNKKPTITSREIQTSVRLVLPGELAKHAVSEGTKAVTKFTSS.

Over residues 1 to 25 (MAPKAEKKPAAKKVAEEEPSEKAAP) the composition is skewed to basic and acidic residues. A disordered region spans residues 1–62 (MAPKAEKKPA…DKKGRKKAKK (62 aa)). Lys7 and Lys39 each carry N6-acetyllysine. A Glycyl lysine isopeptide (Lys-Gly) (interchain with G-Cter in ubiquitin) cross-link involves residue Lys150.

This sequence belongs to the histone H2B family. As to quaternary structure, the nucleosome is a histone octamer containing two molecules each of H2A, H2B, H3 and H4 assembled in one H3-H4 heterotetramer and two H2A-H2B heterodimers. The octamer wraps approximately 147 bp of DNA. In terms of processing, can be acetylated to form H2BK6ac and H2BK33ac. Monoubiquitinated to form H2BK143ub1; may give a specific tag for epigenetic transcriptional activation.

Its subcellular location is the nucleus. The protein localises to the chromosome. Its function is as follows. Core component of nucleosome. Nucleosomes wrap and compact DNA into chromatin, limiting DNA accessibility to the cellular machineries which require DNA as a template. Histones thereby play a central role in transcription regulation, DNA repair, DNA replication and chromosomal stability. DNA accessibility is regulated via a complex set of post-translational modifications of histones, also called histone code, and nucleosome remodeling. This is Histone H2B.5 from Zea mays (Maize).